A 173-amino-acid polypeptide reads, in one-letter code: NADH-ubiquinone oxidoreductase chain 6 (173 aa).

Helical transmembrane passes span 1-21 (MTYF…AVAS), 27-47 (YGVV…LSLG), 48-68 (VSFV…VVFV), 91-111 (GVGF…IGCL), and 141-161 (VGMF…VLEL).

Belongs to the complex I subunit 6 family.

It localises to the mitochondrion membrane. The catalysed reaction is a ubiquinone + NADH + 5 H(+)(in) = a ubiquinol + NAD(+) + 4 H(+)(out). In terms of biological role, core subunit of the mitochondrial membrane respiratory chain NADH dehydrogenase (Complex I) that is believed to belong to the minimal assembly required for catalysis. Complex I functions in the transfer of electrons from NADH to the respiratory chain. The immediate electron acceptor for the enzyme is believed to be ubiquinone. This Fratercula arctica (Atlantic puffin) protein is NADH-ubiquinone oxidoreductase chain 6 (MT-ND6).